The primary structure comprises 189 residues: Thermostable direct hemolysin 2 (189 aa).

The first 24 residues, Met-1–Ala-24, serve as a signal peptide directing secretion. A disulfide bridge connects residues Cys-175 and Cys-185.

The protein belongs to the TDH hemolysin family. In terms of assembly, homodimer.

Its function is as follows. Bacterial hemolysins are exotoxins that attack blood cell membranes and cause cell rupture by mechanisms not clearly defined. The chain is Thermostable direct hemolysin 2 (tdh2) from Vibrio parahaemolyticus serotype O3:K6 (strain RIMD 2210633).